The following is a 305-amino-acid chain: Ribosomal RNA small subunit methyltransferase H (305 aa).

Residues 30–32 (GGH), aspartate 49, phenylalanine 74, aspartate 96, and glutamine 103 each bind S-adenosyl-L-methionine.

Belongs to the methyltransferase superfamily. RsmH family.

The protein resides in the cytoplasm. The catalysed reaction is cytidine(1402) in 16S rRNA + S-adenosyl-L-methionine = N(4)-methylcytidine(1402) in 16S rRNA + S-adenosyl-L-homocysteine + H(+). Functionally, specifically methylates the N4 position of cytidine in position 1402 (C1402) of 16S rRNA. This is Ribosomal RNA small subunit methyltransferase H from Francisella tularensis subsp. mediasiatica (strain FSC147).